A 189-amino-acid chain; its full sequence is Glucose-6-phosphate isomerase (189 aa).

Fe cation is bound by residues His88, His90, Glu97, and His136.

Belongs to the archaeal-type GPI family. Homodimer. Fe cation serves as cofactor.

Its subcellular location is the cytoplasm. The catalysed reaction is alpha-D-glucose 6-phosphate = beta-D-fructose 6-phosphate. It participates in carbohydrate degradation; glycolysis; D-glyceraldehyde 3-phosphate and glycerone phosphate from D-glucose: step 2/4. The sequence is that of Glucose-6-phosphate isomerase (pgiA) from Pyrococcus horikoshii (strain ATCC 700860 / DSM 12428 / JCM 9974 / NBRC 100139 / OT-3).